Here is a 101-residue protein sequence, read N- to C-terminus: Secreted enzymes activator (101 aa).

The segment covering 1–10 (MSRRRRRASA) has biased composition (basic residues). Disordered regions lie at residues 1-26 (MSRRRRRASATRRSAAVSPPHTPYGS) and 45-101 (TRLA…NGRG). The segment covering 45–60 (TRLAASSRASRAAVGS) has biased composition (low complexity). A DNA-binding region (H-T-H motif) is located at residues 55–74 (RAAVGSFDGAKNRPASSRRQ).

Functionally, increases the production of several extracellular enzymes, like alkaline phosphatase, amylase, protease or lipase. When present in high concentrations, delays the production of pigments and sporulation. The protein is Secreted enzymes activator (saf) of Streptomyces griseus.